The primary structure comprises 488 residues: E3 ubiquitin-protein ligase TRIM39 (488 aa).

The RING-type zinc finger occupies 29–70 (CSVCLEYLKEPVIIECGHNFCKACITRWWEDLERDFPCPVCR). The segment at 102-143 (RDESLCSQHHEPLSLFCYEDQEAVCLICAISHTHRPHTVVPM) adopts a B box-type zinc-finger fold. Zn(2+) contacts are provided by Cys107, His110, Cys129, and His135. Residues 181–250 (ELKRLVESRR…AHLAAEVEGK (70 aa)) adopt a coiled-coil conformation. Interaction with CDKN1A stretches follow at residues 268 to 307 (KCEK…QLIA) and 359 to 488 (TSGR…TDWE). Residues 289–484 (SNFPRQYFAL…NAAPLTIRPP (196 aa)) enclose the B30.2/SPRY domain.

The protein belongs to the TRIM/RBCC family. In terms of assembly, interacts with MOAP1. Interacts with CDKN1A. In terms of processing, autoubiquitinated.

The protein localises to the cytoplasm. It is found in the cytosol. It localises to the mitochondrion. The protein resides in the nucleus. The enzyme catalyses S-ubiquitinyl-[E2 ubiquitin-conjugating enzyme]-L-cysteine + [acceptor protein]-L-lysine = [E2 ubiquitin-conjugating enzyme]-L-cysteine + N(6)-ubiquitinyl-[acceptor protein]-L-lysine.. It functions in the pathway protein modification; protein ubiquitination. Its function is as follows. E3 ubiquitin-protein ligase. May facilitate apoptosis by inhibiting APC/C-Cdh1-mediated poly-ubiquitination and subsequent proteasome-mediated degradation of the pro-apoptotic protein MOAP1. Regulates the G1/S transition of the cell cycle and DNA damage-induced G2 arrest by stabilizing CDKN1A/p21. Positively regulates CDKN1A/p21 stability by competing with DTL for CDKN1A/p21 binding, therefore disrupting DCX(DTL) E3 ubiquitin ligase complex-mediated CDKN1A/p21 ubiquitination and degradation. The sequence is that of E3 ubiquitin-protein ligase TRIM39 (Trim39) from Mus musculus (Mouse).